The chain runs to 85 residues: Probable weak neurotoxin 3FTx-Lio1 (85 aa).

The first 18 residues, 1 to 18 (MKAVILSLVAAFLYSGYT), serve as a signal peptide directing secretion. 5 disulfide bridges follow: Cys-21–Cys-42, Cys-24–Cys-29, Cys-35–Cys-60, Cys-64–Cys-75, and Cys-76–Cys-81.

It belongs to the three-finger toxin family. Ancestral subfamily. Expressed by the venom gland.

The protein resides in the secreted. The sequence is that of Probable weak neurotoxin 3FTx-Lio1 from Erythrolamprus poecilogyrus (Water snake).